The following is a 296-amino-acid chain: Maltose/maltodextrin transport system permease protein MalG (296 aa).

Residues 1 to 12 (MAMVQPKSQKLR) lie on the Cytoplasmic side of the membrane. A helical transmembrane segment spans residues 13–35 (LLITHLGLLIFIAAIMFPLLMVI). Topologically, residues 36–88 (AISLREGNFATGSLIPDKISWEHWRLALGFSVEHADGRVTPPPFPVLLWLWNS) are periplasmic. One can recognise an ABC transmembrane type-1 domain in the interval 85–281 (LWNSVKIAGI…IPITLVFLLA (197 aa)). The chain crosses the membrane as a helical span at residues 89 to 111 (VKIAGITAIGIVALSTTCAYAFA). Topologically, residues 112–123 (RMRFPGKATLLK) are cytoplasmic. A helical membrane pass occupies residues 124-143 (GMLIFQMFPAVLSLVALYAL). Over 144-152 (FDRLGQYIP) the chain is Periplasmic. Residues 153–175 (FIGLNTHGGVIFAYLGGIALHVW) traverse the membrane as a helical segment. Over 176-204 (TIKGYFETIDSSLEEAAALDGATPWQAFR) the chain is Cytoplasmic. Residues 205–227 (LVLLPLSVPILAVVFILSFIAAI) form a helical membrane-spanning segment. Topologically, residues 228-257 (TEVPVASLLLRDVDSYTLAVGMQQYLNPQN) are periplasmic. A helical transmembrane segment spans residues 258–280 (YLWGDFAAAAVLSAIPITLVFLL). At 281-296 (AQRWLVNGLTAGGVKG) the chain is on the cytoplasmic side.

It belongs to the binding-protein-dependent transport system permease family. MalFG subfamily. The complex is composed of two ATP-binding proteins (MalK), two transmembrane proteins (MalG and MalF) and a solute-binding protein (MalE).

It is found in the cell inner membrane. In terms of biological role, part of the ABC transporter complex MalEFGK involved in maltose/maltodextrin import. Probably responsible for the translocation of the substrate across the membrane. This chain is Maltose/maltodextrin transport system permease protein MalG (malG), found in Salmonella typhimurium (strain LT2 / SGSC1412 / ATCC 700720).